The chain runs to 566 residues: MRQSTYLAPTMRDVPADAEAISHQLMLRAGMMRQIAAGVYAYLPLAKRTIAKIEAIIREELDAIGAQELTLPSLHPAELWQASGRWEAMGDELVRLKDRHNRDFALGPTHEEVITSLIKDGIASYKKLPLCVYQVQTKFRDERRPRFGLLRGREFIMKDAYSFHDSPESLDEAYWQMHGAYSRIFTRVGLEFRPVIADSGAMGGKDTHEFMALASVGEDTVVYSDGSDYAANLEMAKAALPEAPSVQAHGLLEKRATPEAKTVDEAAEALGFDADDIFKALVVVVDDVLSLFILRGNDELNEVKALHELGAKTLRMASEEEVVAAFGATPGSIGPVGVKDVPIYADYRIRSMERIACGANETGYHYVNVGPGRDYEVTAYKDLRTVREGDPSPDGKGTLRFAEGIEIGQIFKLGTRYSESLDAKYLDGQGKAQPFLMGCYGIGVSRTLAAVIEQHHDEAGIVWPKAVAPFDVHLLALNVKNEDQKTLAEQLYSDIRQAGIDVLYDDRPERAGVKFKDADLIGLPVRVAVGKRAGEGIIEVKVRKTGEQLELTASELVRWLNDFLRE.

The protein belongs to the class-II aminoacyl-tRNA synthetase family. ProS type 1 subfamily. In terms of assembly, homodimer.

The protein localises to the cytoplasm. The catalysed reaction is tRNA(Pro) + L-proline + ATP = L-prolyl-tRNA(Pro) + AMP + diphosphate. Catalyzes the attachment of proline to tRNA(Pro) in a two-step reaction: proline is first activated by ATP to form Pro-AMP and then transferred to the acceptor end of tRNA(Pro). As ProRS can inadvertently accommodate and process non-cognate amino acids such as alanine and cysteine, to avoid such errors it has two additional distinct editing activities against alanine. One activity is designated as 'pretransfer' editing and involves the tRNA(Pro)-independent hydrolysis of activated Ala-AMP. The other activity is designated 'posttransfer' editing and involves deacylation of mischarged Ala-tRNA(Pro). The misacylated Cys-tRNA(Pro) is not edited by ProRS. This chain is Proline--tRNA ligase, found in Shouchella clausii (strain KSM-K16) (Alkalihalobacillus clausii).